Consider the following 326-residue polypeptide: uncharacterized protein (326 aa).

28-35 lines the ATP pocket; sequence GPINSGKT.

The protein belongs to the archaeal ATPase family.

This is an uncharacterized protein from Pyrococcus abyssi (strain GE5 / Orsay).